The sequence spans 168 residues: DAZ-associated protein 2 (168 aa).

Positions 1-13 (MNSKGQYPTQPTY) are enriched in low complexity. Residues 1–25 (MNSKGQYPTQPTYPVQPPGNPVYPQ) are disordered. The short motif at 39 to 42 (PPAY) is the PPAY element. At Ser-77 the chain carries Phosphoserine.

In terms of assembly, interacts with SOX6. Interacts with DAZ1 and DAZL. Interacts with IL17RB. May interact with FAM168B. Interacts with INCA1. Interacts with EIF4G1 and EIF4G2. Interacts (via PPAY motif) with NEDD4 (via WW domains). Interacts with transcription factor TCF4; the interaction results in localization of DAZAP2 to the nucleus. Interacts with transcription factors TCF7 and TCF7L1. Interacts with transcription factor LEF1. Interacts with serine/threonine-protein kinase HIPK2; the interaction results in phosphorylation of DAZAP2 which causes localization of DAZAP2 to the nucleus, reduces interaction of DAZAP2 with HIPK2 and prevents DAZAP2-dependent degradation of HIPK2. Interacts with ubiquitin ligase SIAH1; the interaction is decreased following phosphorylation of DAZAP2 by HIPK2. Interacts with TP53; the interaction is triggered by DNA damage. Post-translationally, ubiquitinated by SMURF2, leading to proteasomal degradation. Ubiquitinated by NEDD4, leading to proteasomal degradation. Following DNA damage, phosphorylated by HIPK2 which promotes DAZAP2 localization to the nucleus, reduces interaction of DAZAP2 with HIPK2 and SIAH1, and prevents DAZAP2-dependent ubiquitination of HIPK2 by E3 ubiquitin-protein ligase SIAH1 and subsequent HIPK2 proteasomal degradation. Widely expressed. Highly expressed in brain.

The protein localises to the cytoplasm. The protein resides in the nucleus. It localises to the nucleus speckle. It is found in the nuclear body. Its subcellular location is the stress granule. In unstressed cells, promotes SIAH1-mediated polyubiquitination and degradation of the serine/threonine-protein kinase HIPK2, probably by acting as a loading factor that potentiates complex formation between HIPK2 and ubiquitin ligase SIAH1. In response to DNA damage, localizes to the nucleus following phosphorylation by HIPK2 and modulates the expression of a subset of TP53/p53 target genes by binding to TP53 at target gene promoters. This limits the expression of a number of cell death-mediating TP53 target genes, reducing DNA damage-induced cell death. Enhances the binding of transcription factor TCF7L2/TCF4, a Wnt signaling pathway effector, to the promoters of target genes. Plays a role in stress granule formation. In Mus musculus (Mouse), this protein is DAZ-associated protein 2 (Dazap2).